The following is a 649-amino-acid chain: Threonine--tRNA ligase (649 aa).

The region spanning 1–63 is the TGS domain; the sequence is MSSIKITFPD…KEDGSIEIIT (63 aa). Residues 245–543 form a catalytic region; sequence DHRVIGNELD…LTEMYKGAFP (299 aa). Cys339, His390, and His520 together coordinate Zn(2+).

The protein belongs to the class-II aminoacyl-tRNA synthetase family. In terms of assembly, homodimer. It depends on Zn(2+) as a cofactor.

The protein localises to the cytoplasm. It catalyses the reaction tRNA(Thr) + L-threonine + ATP = L-threonyl-tRNA(Thr) + AMP + diphosphate + H(+). Functionally, catalyzes the attachment of threonine to tRNA(Thr) in a two-step reaction: L-threonine is first activated by ATP to form Thr-AMP and then transferred to the acceptor end of tRNA(Thr). Also edits incorrectly charged L-seryl-tRNA(Thr). This Ligilactobacillus salivarius (strain UCC118) (Lactobacillus salivarius) protein is Threonine--tRNA ligase.